A 1161-amino-acid polypeptide reads, in one-letter code: Lateral signaling target protein 2 homolog (1161 aa).

6 disordered regions span residues 417 to 510 (ATGS…EVDD), 583 to 831 (AAGS…PTQS), 890 to 918 (MNSS…HNHP), 935 to 978 (DQQN…SVES), 992 to 1014 (SSPV…TGQE), and 1029 to 1095 (GKAS…EPPR). Gly residues predominate over residues 419–429 (GSSGFGSGRGG). The span at 438-453 (PKQRHNQAHLRQRGAP) shows a compositional bias: basic residues. Basic and acidic residues predominate over residues 468–487 (GDDREPVVEEDNNNHLRKEI). The span at 488–510 (EEEDVDDDMEEEEEDEEEDEVDD) shows a compositional bias: acidic residues. A compositionally biased stretch (low complexity) spans 583–601 (AAGSGGQQQQQQQQQLIDS). A compositionally biased stretch (acidic residues) spans 669 to 704 (SDYEEADVDDEPDDVDADDDDEEEDDVVGEVEEQND). The segment covering 728–742 (KAARNHRKSSHHRPR) has biased composition (basic residues). Positions 743 to 757 (PSTSSSSSSAAYRNK) are enriched in low complexity. The span at 758-773 (SQSHQHHHHHHHHHHH) shows a compositional bias: basic residues. 2 stretches are compositionally biased toward low complexity: residues 781–800 (GTSS…SNGS) and 807–831 (MQQQ…PTQS). Positions 896-910 (EPDEPPEPSGSEEES) are enriched in acidic residues. 2 stretches are compositionally biased toward polar residues: residues 935-948 (DQQN…QSIY) and 956-967 (EQDSVFGSSGDS). Over residues 996–1010 (GAGGAGGGGMVGGSR) the composition is skewed to gly residues. A compositionally biased stretch (low complexity) spans 1054–1065 (SRSSPSSPVNSN). A compositionally biased stretch (basic and acidic residues) spans 1081–1094 (TAHEQQRRMPEEPP). Residues 1099-1159 (DCDAPRCMAC…VCRDCYIHEV (61 aa)) form an FYVE-type zinc finger. Cys1105, Cys1108, Cys1121, Cys1124, Cys1129, Cys1132, Cys1151, and Cys1154 together coordinate Zn(2+).

This sequence belongs to the lst-2 family.

In terms of biological role, negative regulator of epidermal growth factor receptor (EGFR) signaling. The chain is Lateral signaling target protein 2 homolog from Anopheles gambiae (African malaria mosquito).